The sequence spans 376 residues: PqqA peptide cyclase (376 aa).

Residues 4–219 (VPPPLSVLLE…VETARRSLGD (216 aa)) form the Radical SAM core domain. Residues C18, C22, and C25 each contribute to the [4Fe-4S] cluster site.

It belongs to the radical SAM superfamily. PqqE family. Interacts with PqqD. The interaction is necessary for activity of PqqE. It depends on [4Fe-4S] cluster as a cofactor.

The enzyme catalyses [PQQ precursor protein] + S-adenosyl-L-methionine = E-Y cross-linked-[PQQ precursor protein] + 5'-deoxyadenosine + L-methionine + H(+). It participates in cofactor biosynthesis; pyrroloquinoline quinone biosynthesis. Catalyzes the cross-linking of a glutamate residue and a tyrosine residue in the PqqA protein as part of the biosynthesis of pyrroloquinoline quinone (PQQ). In Xanthomonas campestris pv. campestris (strain 8004), this protein is PqqA peptide cyclase.